The primary structure comprises 614 residues: Phosphomethylpyrimidine synthase (614 aa).

Substrate-binding positions include Asn230, Met259, Tyr288, His324, 344–346 (SRG), 385–388 (DGLR), and Glu424. His428 contacts Zn(2+). Tyr451 contributes to the substrate binding site. His492 is a binding site for Zn(2+). Positions 572, 575, and 580 each coordinate [4Fe-4S] cluster.

It belongs to the ThiC family. In terms of assembly, homodimer. [4Fe-4S] cluster is required as a cofactor.

It carries out the reaction 5-amino-1-(5-phospho-beta-D-ribosyl)imidazole + S-adenosyl-L-methionine = 4-amino-2-methyl-5-(phosphooxymethyl)pyrimidine + CO + 5'-deoxyadenosine + formate + L-methionine + 3 H(+). It participates in cofactor biosynthesis; thiamine diphosphate biosynthesis. Functionally, catalyzes the synthesis of the hydroxymethylpyrimidine phosphate (HMP-P) moiety of thiamine from aminoimidazole ribotide (AIR) in a radical S-adenosyl-L-methionine (SAM)-dependent reaction. In Stenotrophomonas maltophilia (strain K279a), this protein is Phosphomethylpyrimidine synthase.